The chain runs to 455 residues: Probable transcription factor GLK1 (455 aa).

Low complexity predominate over residues 145-163 (AAVEAKSSSPSSTTSSSQE). The disordered stretch occupies residues 145 to 183 (AAVEAKSSSPSSTTSSSQEAESRHKSSSKSSHGKKKAKV). Residues 169–181 (KSSSKSSHGKKKA) show a composition bias toward basic residues. Residues 177–236 (GKKKAKVDWTPELHRRFVQAVEQLGIDKAVPSRILEIMGIDSLTRHNIASHLQKYRSHRK) form the HTH myb-type domain. A DNA-binding region (H-T-H motif) is located at residues 207-232 (PSRILEIMGIDSLTRHNIASHLQKYR).

Expressed in leaves.

Its subcellular location is the nucleus. Its function is as follows. Probable transcriptional activator that promotes chloroplast development. Acts as an activator of nuclear photosynthetic genes involved in chlorophyll biosynthesis, light harvesting, and electron transport. This is Probable transcription factor GLK1 (GLK1) from Oryza sativa subsp. japonica (Rice).